The primary structure comprises 338 residues: GTPase Obg (338 aa).

Positions 1–159 (MKFVDSASVF…FTLDLELKLM (159 aa)) constitute an Obg domain. The interval 123-145 (GGRGNQHFATSTHQAPRHAEPGQ) is disordered. The OBG-type G domain maps to 160–323 (ADVGLVGFPN…LKDALWRIIV (164 aa)). GTP contacts are provided by residues 166–173 (GFPNAGKS), 191–195 (FTTLV), 213–216 (DIPG), 280–283 (TKMD), and 304–306 (SAV). The Mg(2+) site is built by serine 173 and threonine 193.

It belongs to the TRAFAC class OBG-HflX-like GTPase superfamily. OBG GTPase family. As to quaternary structure, monomer. Requires Mg(2+) as cofactor.

It localises to the cytoplasm. An essential GTPase which binds GTP, GDP and possibly (p)ppGpp with moderate affinity, with high nucleotide exchange rates and a fairly low GTP hydrolysis rate. Plays a role in control of the cell cycle, stress response, ribosome biogenesis and in those bacteria that undergo differentiation, in morphogenesis control. The protein is GTPase Obg of Chlorobium chlorochromatii (strain CaD3).